We begin with the raw amino-acid sequence, 352 residues long: Potassium/proton antiporter CemA (352 aa).

The next 3 helical transmembrane spans lie at 52–72 (VLVS…IHFF), 227–247 (IAAL…IILF), and 312–332 (IILL…KYWI).

This sequence belongs to the CemA family.

The protein localises to the plastid. It localises to the chloroplast inner membrane. It catalyses the reaction K(+)(in) + H(+)(out) = K(+)(out) + H(+)(in). In terms of biological role, contributes to K(+)/H(+) antiport activity by supporting proton efflux to control proton extrusion and homeostasis in chloroplasts in a light-dependent manner to modulate photosynthesis. Prevents excessive induction of non-photochemical quenching (NPQ) under continuous-light conditions. Indirectly promotes efficient inorganic carbon uptake into chloroplasts. The sequence is that of Potassium/proton antiporter CemA from Oltmannsiellopsis viridis (Marine flagellate).